Here is an 826-residue protein sequence, read N- to C-terminus: MWALCSLLRSAAGRTMSQGRTISQAPARRERPRKDPLRHLRTREKRGPSGCSGGPNTVYLQVVAAGSRDSGAALYVFSEFNRYLFNCGEGVQRLMQEHKLKVVRLDNIFLTRMHWSNVGGLSGMILTLKETGLPKCVLSGPPQLEKYLEAIKIFSGPLKGIELAVRPHSAPEYEDETMTVYQIPIHSEQRRGRHQPWQSPERPLSRLSPERSSDSESNENEPHLPHGVSQRRGVRDSSLVVAFICKLHLKRGNFLVLKAKEMGLPVGTAAIAPIIAAVKDGKSITHEGREILAEELCTPPDPGAAFVVVECPDESFIQPICENATFQRYQGKADAPVALVVHMAPESVLVDSRYQQWMERFGPDTQHLVLNENCASVHNLRSHKIQTQLNLIHPDIFPLLTSFPCKKEGPTLSVPMVQGECLLKYQLRPRREWQRDAIITCNPEEFIVEALQLPNFQQSVQEYRRSVQDVPAPAEKRSQYPEIIFLGTGSAIPMKIRNVSATLVNISPDTSLLLDCGEGTFGQLCRHYGDQVDRVLGTLAAVFVSHLHADHHTGLLNILLQREQALASLGKPLHPLLVVAPSQLKAWLQQYHNQCQEVLHHISMIPAKCLQEGAEISSPAVERLISSLLRTCDLEEFQTCLVRHCKHAFGCALVHTSGWKVVYSGDTMPCEALVRMGKDATLLIHEATLEDGLEEEAVEKTHSTTSQAISVGMRMNAEFIMLNHFSQRYAKVPLFSPNFNEKVGVAFDHMKVCFGDFPTMPKLIPPLKALFAGDIEEMEERREKRELRQVRAALLSGELAGGLEDGEPQQKRAHTEEPQAKKVRAQ.

The N-terminal 16 residues, 1–16 (MWALCSLLRSAAGRTM), are a transit peptide targeting the mitochondrion. The segment covering 15 to 24 (TMSQGRTISQ) has biased composition (polar residues). Disordered regions lie at residues 15–51 (TMSQGRTISQAPARRERPRKDPLRHLRTREKRGPSGC) and 189–231 (QRRG…VSQR). Residues 27 to 38 (ARRERPRKDPLR) are compositionally biased toward basic and acidic residues. Phosphoserine occurs at positions 199, 208, 212, 229, 618, and 736. Positions 208-224 (SPERSSDSESNENEPHL) are enriched in basic and acidic residues. Residues 798–826 (ELAGGLEDGEPQQKRAHTEEPQAKKVRAQ) form a disordered region. Over residues 808–820 (PQQKRAHTEEPQA) the composition is skewed to basic and acidic residues.

Belongs to the RNase Z family. Homodimer. Interacts with PTCD1. Zn(2+) is required as a cofactor.

The protein resides in the mitochondrion. The protein localises to the mitochondrion matrix. It localises to the mitochondrion nucleoid. Its subcellular location is the nucleus. It carries out the reaction Endonucleolytic cleavage of RNA, removing extra 3' nucleotides from tRNA precursor, generating 3' termini of tRNAs. A 3'-hydroxy group is left at the tRNA terminus and a 5'-phosphoryl group is left at the trailer molecule.. In terms of biological role, zinc phosphodiesterase, which displays mitochondrial tRNA 3'-processing endonuclease activity. Involved in tRNA maturation, by removing a 3'-trailer from precursor tRNA. Associates with mitochondrial DNA complexes at the nucleoids to initiate RNA processing and ribosome assembly. In Gorilla gorilla gorilla (Western lowland gorilla), this protein is Zinc phosphodiesterase ELAC protein 2 (ELAC2).